The following is a 532-amino-acid chain: MAKRVAIVGAGVSGLASIKCCLEEGLEPTCFERSDDLGGLWRFTEHVEEGRASLYKSVVSNSCKEMSCYPDFPFPEDYPNYVPNSHFLEYLRMYANQFNLLKCIQFKTKVCSVTKHEDFNTTGQWDVVTLCEGKQESAVFDAVMVCTGFLTNPYLPLDSFPGINTFKGQYFHSRQYKHPDIFKDKSVLVVGMGNSGTDIAVEASHLAKKVFLSTTGGAWVISRVFDSGYPWDMVFMTRFQNMFRNSLPTPIVNWLIAKKMNSWFNHANYGLIPEDRIQLREPVLNDELPGRIITGKVLIKPSIKEVKENSVVFNSSPEEEPIDIIVFATGYTFAFPFLDESVVKVEDGQASLYKYIFPAHLQKPTLAVIGLIKPLGSLLPTGDTQARWAVRVLKGVNKLPPSSVMIQEVNTRKENKPSGFGLCYCKALQSDYIAYIDELLTYIDAKPNMFSLLLTDPHLALTIFFGPCTPYQFRLTGPGKWEGARNAIMTQWDRTFKVTKTRIVKESPSPFASLLKLFSFLALLVAIFQIFL.

The residue at position 2 (Ala2) is an N-acetylalanine. Residues Ala2–Pro510 lie on the Lumenal side of the membrane. FAD is bound by residues Gly9–Ser13, Glu32, Leu40–Trp41, and Asn61–Ser62. Position 60–61 (Ser60–Asn61) interacts with NADP(+). An N-linked (GlcNAc...) (high mannose) asparagine glycan is attached at Asn120. Ser195–Asp198 is a binding site for NADP(+). Residues Phe511 to Phe531 traverse the membrane as a helical segment. Position 532 (Leu532) is a topological domain, cytoplasmic.

It belongs to the FMO family. The cofactor is FAD. As to expression, liver.

Its subcellular location is the endoplasmic reticulum membrane. The enzyme catalyses hypotaurine + NADPH + O2 + H(+) = taurine + NADP(+) + H2O. It carries out the reaction hypotaurine + NADH + O2 + H(+) = taurine + NAD(+) + H2O. The catalysed reaction is trimethylamine + NADPH + O2 = trimethylamine N-oxide + NADP(+) + H2O. It catalyses the reaction N,N-dimethylaniline + NADPH + O2 + H(+) = N,N-dimethylaniline N-oxide + NADP(+) + H2O. Functionally, broad spectrum monooxygenase that catalyzes the oxygenation of a wide variety of nitrogen- and sulfur-containing compounds including xenobiotics. Catalyzes the S-oxygenation of hypotaurine to produce taurine, an organic osmolyte involved in cell volume regulation as well as a variety of cytoprotective and developmental processes. In vitro, catalyzes the N-oxygenation of trimethylamine (TMA) to produce trimethylamine N-oxide (TMAO) and could therefore participate to the detoxification of this compound that is generated by the action of gut microbiota from dietary precursors such as choline, choline containing compounds, betaine or L-carnitine. This chain is Flavin-containing monooxygenase 1 (FMO1), found in Sus scrofa (Pig).